Here is a 358-residue protein sequence, read N- to C-terminus: Tetraacyldisaccharide 4'-kinase (358 aa).

An ATP-binding site is contributed by 71 to 78; sequence IAGGAGKT.

This sequence belongs to the LpxK family.

The catalysed reaction is a lipid A disaccharide + ATP = a lipid IVA + ADP + H(+). Its pathway is glycolipid biosynthesis; lipid IV(A) biosynthesis; lipid IV(A) from (3R)-3-hydroxytetradecanoyl-[acyl-carrier-protein] and UDP-N-acetyl-alpha-D-glucosamine: step 6/6. Functionally, transfers the gamma-phosphate of ATP to the 4'-position of a tetraacyldisaccharide 1-phosphate intermediate (termed DS-1-P) to form tetraacyldisaccharide 1,4'-bis-phosphate (lipid IVA). The protein is Tetraacyldisaccharide 4'-kinase of Methylibium petroleiphilum (strain ATCC BAA-1232 / LMG 22953 / PM1).